Here is a 505-residue protein sequence, read N- to C-terminus: Glutamyl-tRNA(Gln) amidotransferase subunit A, mitochondrial (505 aa).

Catalysis depends on charge relay system residues Lys-76 and Ser-158. Ser-182 acts as the Acyl-ester intermediate in catalysis.

This sequence belongs to the amidase family. GatA subfamily. Subunit of the heterotrimeric GatCAB amidotransferase (AdT) complex, composed of A, B and C subunits.

It localises to the mitochondrion. It catalyses the reaction L-glutamyl-tRNA(Gln) + L-glutamine + ATP + H2O = L-glutaminyl-tRNA(Gln) + L-glutamate + ADP + phosphate + H(+). Its function is as follows. Allows the formation of correctly charged Gln-tRNA(Gln) through the transamidation of misacylated Glu-tRNA(Gln) in the mitochondria. The reaction takes place in the presence of glutamine and ATP through an activated gamma-phospho-Glu-tRNA(Gln). In Ixodes scapularis (Black-legged tick), this protein is Glutamyl-tRNA(Gln) amidotransferase subunit A, mitochondrial.